A 22-amino-acid chain; its full sequence is GLWQKIKDKASELVSGIVEGVK.

Lysine amide is present on K22.

This sequence belongs to the frog skin active peptide (FSAP) family. Caerin subfamily. Expressed by the skin dorsal glands.

It is found in the secreted. Functionally, antibacterial peptide with narrow spectrum of activity. Inhibits the formation of NO by neuronal nitric oxide synthase. The protein is Caerin-3.1 of Litoria rothii (Roth's tree frog).